A 315-amino-acid polypeptide reads, in one-letter code: Outer membrane protease IcsP (315 aa).

The N-terminal stretch at 1-20 (MKLKFFVLALCVPAIFTTHA) is a signal peptide. Residues Asp103, Asp105, Asp230, and His232 contribute to the active site.

This sequence belongs to the peptidase A26 family.

The protein localises to the cell outer membrane. In terms of biological role, protease responsible for the cleavage of IcsA between 'Arg-758' and 'Arg-759', removing the entire alpha domain from IscA localized on the bacterial surface. This proteolytic activity contributes to the maintenance of a tight polar cap of IcsA, which is important to Shigella actin-based motility. The protein is Outer membrane protease IcsP (icsP) of Shigella flexneri.